A 652-amino-acid chain; its full sequence is Nitrate reductase-like protein NarX (652 aa).

The segment at 1 to 251 (MTVTPRTGSR…FGDQTDVPES (251 aa)) is nitrate reductase alpha subunit. Residues 53 to 117 (DKVVRSTHGV…AFSWYTYSPT (65 aa)) enclose the 4Fe-4S Mo/W bis-MGD-type domain. Residues H60, C64, C68, and C103 each contribute to the [4Fe-4S] cluster site. D233 serves as a coordination point for Mo-bis(molybdopterin guanine dinucleotide). The segment at 258-415 (VWQCASVLLT…TVAAVCRTGD (158 aa)) is nitrate reductase delta subunit. 5 consecutive transmembrane segments (helical) span residues 416–436 (MMGE…VAVG), 466–486 (PMFH…LVIP), 504–524 (AVVL…LLIY), 545–565 (LVLV…SGVV), and 595–615 (APLY…LWPF). Positions 416–652 (MMGELFWTVV…VLTRPRRRGW (237 aa)) are nitrate reductase gamma subunit. The heme b site is built by H469 and H479. H602 and H620 together coordinate heme b.

The protein in the N-terminal section; belongs to the nitrate reductase alpha subunit family. This sequence in the central section; belongs to the NarJ/NarW family. It in the C-terminal section; belongs to the nitrate reductase gamma subunit family. Requires [4Fe-4S] cluster as cofactor. It depends on Mo-bis(molybdopterin guanine dinucleotide) as a cofactor. Heme b is required as a cofactor.

Its subcellular location is the cell membrane. Functionally, does not seem to have nitrate reductase activity. The protein is Nitrate reductase-like protein NarX (narX) of Mycobacterium tuberculosis (strain CDC 1551 / Oshkosh).